A 463-amino-acid polypeptide reads, in one-letter code: L-seryl-tRNA(Sec) selenium transferase (463 aa).

K295 is modified (N6-(pyridoxal phosphate)lysine).

The protein belongs to the SelA family. As to quaternary structure, homodecamer; pentamer of dimers. Binds only one seryl-tRNA(Sec) per dimer. The cofactor is pyridoxal 5'-phosphate.

The protein localises to the cytoplasm. It catalyses the reaction L-seryl-tRNA(Sec) + selenophosphate + H(+) = L-selenocysteinyl-tRNA(Sec) + phosphate. It functions in the pathway aminoacyl-tRNA biosynthesis; selenocysteinyl-tRNA(Sec) biosynthesis; selenocysteinyl-tRNA(Sec) from L-seryl-tRNA(Sec) (bacterial route): step 1/1. Converts seryl-tRNA(Sec) to selenocysteinyl-tRNA(Sec) required for selenoprotein biosynthesis. This chain is L-seryl-tRNA(Sec) selenium transferase, found in Shigella flexneri serotype 5b (strain 8401).